The sequence spans 396 residues: Flavohemoprotein (396 aa).

Positions 1-136 constitute a Globin domain; the sequence is MLDNQTIATV…LADIFINREE (136 aa). Histidine 85 contacts heme b. Residues tyrosine 95 and glutamate 135 each act as charge relay system in the active site. Residues 147–396 are reductase; it reads GGWRGLRPFR…YECFGPHKVI (250 aa). Positions 150 to 255 constitute an FAD-binding FR-type domain; it reads RGLRPFRINR…TAPRGDFFLD (106 aa). Residues tyrosine 188 and 204–207 contribute to the FAD site; that span reads RQYS. 268–273 lines the NADP(+) pocket; the sequence is GVGLTP. FAD is bound at residue 389 to 392; the sequence is CFGP.

Belongs to the globin family. Two-domain flavohemoproteins subfamily. This sequence in the C-terminal section; belongs to the flavoprotein pyridine nucleotide cytochrome reductase family. Heme b is required as a cofactor. Requires FAD as cofactor.

It catalyses the reaction 2 nitric oxide + NADPH + 2 O2 = 2 nitrate + NADP(+) + H(+). It carries out the reaction 2 nitric oxide + NADH + 2 O2 = 2 nitrate + NAD(+) + H(+). Functionally, is involved in NO detoxification in an aerobic process, termed nitric oxide dioxygenase (NOD) reaction that utilizes O(2) and NAD(P)H to convert NO to nitrate, which protects the bacterium from various noxious nitrogen compounds. Therefore, plays a central role in the inducible response to nitrosative stress. The polypeptide is Flavohemoprotein (Photorhabdus laumondii subsp. laumondii (strain DSM 15139 / CIP 105565 / TT01) (Photorhabdus luminescens subsp. laumondii)).